The chain runs to 197 residues: Glycerol-3-phosphate acyltransferase (197 aa).

A run of 5 helical transmembrane segments spans residues 7 to 27 (PSIA…LLLT), 56 to 76 (LAAL…WIAW), 82 to 102 (DIGW…WLGF), 116 to 136 (FGLG…MLAI), and 157 to 177 (YFGR…IIWL).

The protein belongs to the PlsY family. In terms of assembly, probably interacts with PlsX.

The protein resides in the cell inner membrane. It catalyses the reaction an acyl phosphate + sn-glycerol 3-phosphate = a 1-acyl-sn-glycero-3-phosphate + phosphate. It participates in lipid metabolism; phospholipid metabolism. Catalyzes the transfer of an acyl group from acyl-phosphate (acyl-PO(4)) to glycerol-3-phosphate (G3P) to form lysophosphatidic acid (LPA). This enzyme utilizes acyl-phosphate as fatty acyl donor, but not acyl-CoA or acyl-ACP. This Erythrobacter litoralis (strain HTCC2594) protein is Glycerol-3-phosphate acyltransferase.